The sequence spans 381 residues: Hps1-dma1 cluster transcription factor tfc7 (381 aa).

Positions 10–37 (CDHCSATKIKCTQERPQCTRCRALGRDC) form a DNA-binding region, zn(2)-C6 fungal-type. The segment at 41–88 (RSLRAGKPPRSSQGLNRKISNAPVLPRQNTPVSNPTSMSSKPEHWPTM) is disordered. Polar residues-rich tracts occupy residues 50 to 59 (RSSQGLNRKI) and 67 to 80 (RQNT…SMSS).

It localises to the nucleus. In terms of biological role, transcription factor that regulates the expression of the hps1-dma1 gene cluster that probably mediates the biosynthesis a derivative of cyclopiazonic acid (CPA). Further studies are required to whether the CPA-like hps1-dma1 cluster is functional or a non-functional relic reflecting evolution of D.septosporum. The chain is Hps1-dma1 cluster transcription factor tfc7 (tfc7) from Dothistroma septosporum (strain NZE10 / CBS 128990) (Red band needle blight fungus).